Here is a 164-residue protein sequence, read N- to C-terminus: MSKKALSRVVYPGTFDPITNGHLDLIERAAKMFDEVIIAVAASPSKNTMFTLEERVDFARQVTRHLDNVTAQGFSGLMVDFARAVDANVLIRGLRTTVDFEYEFGLTNMYRRLLPGLESVFLTPSEEHAFISSTIVREVAIHGGDVTQFVPTVVAEALHQKKKV.

T14 serves as a coordination point for substrate. ATP contacts are provided by residues 14–15 and H22; that span reads TF. Residues K46, M78, and R92 each contribute to the substrate site. Residues 93-95, E103, and 128-134 contribute to the ATP site; these read GLR and HAFISST.

It belongs to the bacterial CoaD family. Homohexamer. Mg(2+) serves as cofactor.

It localises to the cytoplasm. The catalysed reaction is (R)-4'-phosphopantetheine + ATP + H(+) = 3'-dephospho-CoA + diphosphate. It functions in the pathway cofactor biosynthesis; coenzyme A biosynthesis; CoA from (R)-pantothenate: step 4/5. Its function is as follows. Reversibly transfers an adenylyl group from ATP to 4'-phosphopantetheine, yielding dephospho-CoA (dPCoA) and pyrophosphate. This Vibrio vulnificus (strain CMCP6) protein is Phosphopantetheine adenylyltransferase.